Reading from the N-terminus, the 222-residue chain is Kinetochore protein Spc25 (222 aa).

Positions 51–86 form a coiled coil; that stretch reads RHQRKVGKLQKVLMERREELDKRVSFIEELDRELEA.

The protein belongs to the SPC25 family. Component of the Ndc80 complex, which is composed of Ndc80, Nuf2 and Spc25.

It localises to the nucleus. It is found in the chromosome. Its subcellular location is the centromere. The protein localises to the kinetochore. Functionally, acts as a component of the essential kinetochore-associated Ndc80 complex, which is required for chromosome segregation and spindle checkpoint activity during meiosis and mitosis. Required for kinetochore integrity and the organization of stable microtubule binding sites in the outer plate of the kinetochore. Participates in SAC signaling that responds specifically to disruptions in spindle microtubule dynamics. The NDC80 complex synergistically enhances the affinity of the SKA1 complex for microtubules and may allow the NDC80 complex to track depolymerizing microtubules. This chain is Kinetochore protein Spc25, found in Drosophila mauritiana (Fruit fly).